Reading from the N-terminus, the 419-residue chain is Serine hydroxymethyltransferase (419 aa).

(6S)-5,6,7,8-tetrahydrofolate contacts are provided by residues leucine 121 and 125-127; that span reads GHL. The residue at position 231 (lysine 231) is an N6-(pyridoxal phosphate)lysine.

The protein belongs to the SHMT family. Homodimer. Requires pyridoxal 5'-phosphate as cofactor.

The protein resides in the cytoplasm. The catalysed reaction is (6R)-5,10-methylene-5,6,7,8-tetrahydrofolate + glycine + H2O = (6S)-5,6,7,8-tetrahydrofolate + L-serine. It participates in one-carbon metabolism; tetrahydrofolate interconversion. The protein operates within amino-acid biosynthesis; glycine biosynthesis; glycine from L-serine: step 1/1. Its function is as follows. Catalyzes the reversible interconversion of serine and glycine with tetrahydrofolate (THF) serving as the one-carbon carrier. This reaction serves as the major source of one-carbon groups required for the biosynthesis of purines, thymidylate, methionine, and other important biomolecules. Also exhibits THF-independent aldolase activity toward beta-hydroxyamino acids, producing glycine and aldehydes, via a retro-aldol mechanism. This Phytoplasma mali (strain AT) protein is Serine hydroxymethyltransferase.